Here is a 469-residue protein sequence, read N- to C-terminus: Threonine synthase (469 aa).

Lys112 bears the N6-(pyridoxal phosphate)lysine mark.

This sequence belongs to the threonine synthase family. Requires pyridoxal 5'-phosphate as cofactor.

The catalysed reaction is O-phospho-L-homoserine + H2O = L-threonine + phosphate. It functions in the pathway amino-acid biosynthesis; L-threonine biosynthesis; L-threonine from L-aspartate: step 5/5. Catalyzes the gamma-elimination of phosphate from L-phosphohomoserine and the beta-addition of water to produce L-threonine. The chain is Threonine synthase (thrC) from Pseudomonas aeruginosa (strain ATCC 15692 / DSM 22644 / CIP 104116 / JCM 14847 / LMG 12228 / 1C / PRS 101 / PAO1).